Consider the following 162-residue polypeptide: Endoribonuclease YbeY (162 aa).

3 residues coordinate Zn(2+): histidine 130, histidine 134, and histidine 140.

The protein belongs to the endoribonuclease YbeY family. It depends on Zn(2+) as a cofactor.

The protein resides in the cytoplasm. In terms of biological role, single strand-specific metallo-endoribonuclease involved in late-stage 70S ribosome quality control and in maturation of the 3' terminus of the 16S rRNA. This chain is Endoribonuclease YbeY, found in Nitratidesulfovibrio vulgaris (strain ATCC 29579 / DSM 644 / CCUG 34227 / NCIMB 8303 / VKM B-1760 / Hildenborough) (Desulfovibrio vulgaris).